The primary structure comprises 640 residues: G protein-coupled receptor kinase 1 (640 aa).

Residues 1–201 (MEIENIVANT…LEKRPVDKHT (201 aa)) form an N-terminal region. The RGS domain occupies 52 to 187 (YAFVVEKQPI…IQTMYFHRFL (136 aa)). Residues 202 to 469 (FRLYRVLGKG…AEEIRAHPFF (268 aa)) enclose the Protein kinase domain. ATP-binding positions include 208-216 (LGKGGFGEV) and K231. Residue D327 is the Proton acceptor of the active site. The region spanning 479-544 (EPVPWKKMEA…GCVSIPWQSE (66 aa)) is the AGC-kinase C-terminal domain. The segment at 610–640 (GVDQQQPSTSAKPAAVRSSRAASASGRTSMI) is disordered. Positions 619 to 640 (SAKPAAVRSSRAASASGRTSMI) are enriched in low complexity.

The protein belongs to the protein kinase superfamily. AGC Ser/Thr protein kinase family. GPRK subfamily.

The enzyme catalyses [G-protein-coupled receptor] + ATP = [G-protein-coupled receptor]-phosphate + ADP + H(+). Specifically phosphorylates the activated forms of G protein-coupled receptors. The polypeptide is G protein-coupled receptor kinase 1 (grk-1) (Caenorhabditis briggsae).